The primary structure comprises 321 residues: Beta-ketoacyl-[acyl-carrier-protein] synthase III (321 aa).

Catalysis depends on residues C113 and H246. The segment at 247–251 (QANVR) is ACP-binding. Residue N276 is part of the active site.

It belongs to the thiolase-like superfamily. FabH family. In terms of assembly, homodimer.

The protein resides in the cytoplasm. The enzyme catalyses malonyl-[ACP] + acetyl-CoA + H(+) = 3-oxobutanoyl-[ACP] + CO2 + CoA. Its pathway is lipid metabolism; fatty acid biosynthesis. Catalyzes the condensation reaction of fatty acid synthesis by the addition to an acyl acceptor of two carbons from malonyl-ACP. Catalyzes the first condensation reaction which initiates fatty acid synthesis and may therefore play a role in governing the total rate of fatty acid production. Possesses both acetoacetyl-ACP synthase and acetyl transacylase activities. Its substrate specificity determines the biosynthesis of branched-chain and/or straight-chain of fatty acids. In Enterococcus faecalis (strain ATCC 700802 / V583), this protein is Beta-ketoacyl-[acyl-carrier-protein] synthase III.